The following is a 120-amino-acid chain: NAD(P)H-quinone oxidoreductase subunit 3, chloroplastic (120 aa).

The next 3 membrane-spanning stretches (helical) occupy residues 9 to 29 (IFWA…FISG), 64 to 84 (MFAL…PWAM), and 88 to 108 (VLGV…IVGL).

It belongs to the complex I subunit 3 family. As to quaternary structure, NDH is composed of at least 16 different subunits, 5 of which are encoded in the nucleus.

Its subcellular location is the plastid. The protein localises to the chloroplast thylakoid membrane. It carries out the reaction a plastoquinone + NADH + (n+1) H(+)(in) = a plastoquinol + NAD(+) + n H(+)(out). The catalysed reaction is a plastoquinone + NADPH + (n+1) H(+)(in) = a plastoquinol + NADP(+) + n H(+)(out). NDH shuttles electrons from NAD(P)H:plastoquinone, via FMN and iron-sulfur (Fe-S) centers, to quinones in the photosynthetic chain and possibly in a chloroplast respiratory chain. The immediate electron acceptor for the enzyme in this species is believed to be plastoquinone. Couples the redox reaction to proton translocation, and thus conserves the redox energy in a proton gradient. The protein is NAD(P)H-quinone oxidoreductase subunit 3, chloroplastic of Guizotia abyssinica (Niger).